The sequence spans 392 residues: Olfactomedin-like protein 3 (392 aa).

Residues 1 to 21 (MGPWRCLLLLPLLAAAPRAQQ) form the signal peptide. A coiled-coil region spans residues 25 to 99 (MEYVERRLAL…REVDYLETQN (75 aa)). The 257-residue stretch at 132–388 (DCSDTIASVR…QIIYRMEMKK (257 aa)) folds into the Olfactomedin-like domain. The cysteines at positions 133 and 315 are disulfide-linked. Asparagine 175 and asparagine 235 each carry an N-linked (GlcNAc...) asparagine glycan.

Belongs to the OLFML3 family.

Its subcellular location is the secreted. Secreted scaffold protein that plays an essential role in dorsoventral patterning during early development. Stabilizes axial formation by restricting chordin (CHRD) activity on the dorsal side. Acts by facilitating the association between the tolloid proteases and their substrate chordin (CHRD), leading to enhance chordin (CHRD) degradation. In Gallus gallus (Chicken), this protein is Olfactomedin-like protein 3 (OLFML3).